Reading from the N-terminus, the 61-residue chain is Prophage outer membrane lipoprotein RzoR (61 aa).

A signal peptide spans 1–19 (MRKLKMMLCVMMLPLVVVG). A lipid anchor (N-palmitoyl cysteine) is attached at Cys-20. A lipid anchor (S-diacylglycerol cysteine) is attached at Cys-20.

It belongs to the lambdalikevirus o-spanin family. Homodimer; disulfide-linked. Interacts (via C-terminus) with RZ (via C-terminus). Part of the spanin complex which spans the entire periplasmic space. The spanin complex is composed of spanin, inner membrane subunit and spanin, outer membrane subunit.

The protein resides in the cell outer membrane. In terms of biological role, component of the spanin complex that disrupts the outer membrane and causes cell lysis during virus exit. The spanin complex conducts the final step in cell lysis by disrupting the outer membrane after holin and endolysin action have permeabilized the inner membrane and degraded the host peptidoglycans. This Escherichia coli (strain K12) protein is Prophage outer membrane lipoprotein RzoR (rzoR).